A 484-amino-acid polypeptide reads, in one-letter code: Aspartyl/glutamyl-tRNA(Asn/Gln) amidotransferase subunit B (484 aa).

It belongs to the GatB/GatE family. GatB subfamily. Heterotrimer of A, B and C subunits.

The catalysed reaction is L-glutamyl-tRNA(Gln) + L-glutamine + ATP + H2O = L-glutaminyl-tRNA(Gln) + L-glutamate + ADP + phosphate + H(+). It carries out the reaction L-aspartyl-tRNA(Asn) + L-glutamine + ATP + H2O = L-asparaginyl-tRNA(Asn) + L-glutamate + ADP + phosphate + 2 H(+). Functionally, allows the formation of correctly charged Asn-tRNA(Asn) or Gln-tRNA(Gln) through the transamidation of misacylated Asp-tRNA(Asn) or Glu-tRNA(Gln) in organisms which lack either or both of asparaginyl-tRNA or glutaminyl-tRNA synthetases. The reaction takes place in the presence of glutamine and ATP through an activated phospho-Asp-tRNA(Asn) or phospho-Glu-tRNA(Gln). This is Aspartyl/glutamyl-tRNA(Asn/Gln) amidotransferase subunit B from Cupriavidus metallidurans (strain ATCC 43123 / DSM 2839 / NBRC 102507 / CH34) (Ralstonia metallidurans).